A 565-amino-acid polypeptide reads, in one-letter code: Urocanate hydratase (565 aa).

NAD(+)-binding positions include 61-62, Gln-139, 185-187, Glu-205, Arg-210, 251-252, 272-276, 282-283, and Tyr-331; these read GG, GMG, NA, QTSAH, and YL. Residue Cys-419 is part of the active site. The tract at residues 453–472 is disordered; that stretch reads LDSGSVASPNRETESMRDGS. The span at 463–472 shows a compositional bias: basic and acidic residues; sequence RETESMRDGS. Gly-501 provides a ligand contact to NAD(+).

Belongs to the urocanase family. It depends on NAD(+) as a cofactor.

It is found in the cytoplasm. The enzyme catalyses 4-imidazolone-5-propanoate = trans-urocanate + H2O. It participates in amino-acid degradation; L-histidine degradation into L-glutamate; N-formimidoyl-L-glutamate from L-histidine: step 2/3. Catalyzes the conversion of urocanate to 4-imidazolone-5-propionate. The protein is Urocanate hydratase of Pseudomonas savastanoi pv. phaseolicola (strain 1448A / Race 6) (Pseudomonas syringae pv. phaseolicola (strain 1448A / Race 6)).